A 389-amino-acid chain; its full sequence is Mannitol-1-phosphate 5-dehydrogenase (389 aa).

An NAD(+)-binding site is contributed by 5–16 (AVHFGAGNIGRG). Lys215 is an active-site residue.

Belongs to the mannitol dehydrogenase family. As to quaternary structure, monomer.

The enzyme catalyses D-mannitol 1-phosphate + NAD(+) = beta-D-fructose 6-phosphate + NADH + H(+). Functionally, catalyzes the NAD(H)-dependent interconversion of D-fructose 6-phosphate and D-mannitol 1-phosphate in the mannitol metabolic pathway. The sequence is that of Mannitol-1-phosphate 5-dehydrogenase from Sclerotinia sclerotiorum (strain ATCC 18683 / 1980 / Ss-1) (White mold).